Consider the following 622-residue polypeptide: MFDFEQQLKILPDKPGVYLMKNSLGEVIYVGKAKILKNRVRQYFQKSKNHSEKVRTMVKHISEFEYIVTDSEMEALVLECNLIKKYRPRYNILLKDDKIYPLIKITLNEDFPRIICARNKIKDGAKYFGPYISTGAVYETMEVIKKIFPIRDCKLNIKKGNVKVRPCLNYHIGLCKAPCTGHISKEEYGKIISGVMDFLSGKNKDIIRKLKEDMDTLSENMEFEKAAELRDKIFALEKIIEKQKITTGGFEDEDFINIHSDEKDSCIQVFFSRTGKIIGREHFIIEDTQDLPKGEIVANFIKEFYGGTAYIAKTIYVPEIYDVQLLEDWLSIKKDSKVYIKIPQKGDKKAILNLVEKNARTTLQNFKLKFIQDKKMYETSLEELMEILNLDDIPHRIEAYDVSNIQGVDSVGTMVVFENGRPKHNDYRRFKINEVKGANDYESMKEILRRRFQNGMEEIKRIKERKLEFSAGKFSFFPDLILMDGGKIQVSAALEVLKEFNIDITVCGMVKDDKHRTRGLIYRNEEMPLNRNSNIIKLITRIQDEVHRFAVTYHRSLRSKRVLHSVLEDIPNVGVKRRKELLKRFLSVENIKKASMEELISTPSIDMRTAESIISYFRGYKS.

The region spanning 13–92 (DKPGVYLMKN…IKKYRPRYNI (80 aa)) is the GIY-YIG domain. A UVR domain is found at 204–239 (KDIIRKLKEDMDTLSENMEFEKAAELRDKIFALEKI).

It belongs to the UvrC family. As to quaternary structure, interacts with UvrB in an incision complex.

It is found in the cytoplasm. Its function is as follows. The UvrABC repair system catalyzes the recognition and processing of DNA lesions. UvrC both incises the 5' and 3' sides of the lesion. The N-terminal half is responsible for the 3' incision and the C-terminal half is responsible for the 5' incision. The chain is UvrABC system protein C from Clostridium kluyveri (strain ATCC 8527 / DSM 555 / NBRC 12016 / NCIMB 10680 / K1).